The primary structure comprises 98 residues: Small ribosomal subunit protein uS17 (98 aa).

The tract at residues 1–21 is disordered; that stretch reads MADQKGPKYTPAAEKPRGRRK. Residue K96 forms an Isoglutamyl lysine isopeptide (Lys-Gln) (interchain with Q-Cter in protein Pup) linkage.

This sequence belongs to the universal ribosomal protein uS17 family. Part of the 30S ribosomal subunit.

Functionally, one of the primary rRNA binding proteins, it binds specifically to the 5'-end of 16S ribosomal RNA. The polypeptide is Small ribosomal subunit protein uS17 (rpsQ) (Mycolicibacterium smegmatis (strain ATCC 700084 / mc(2)155) (Mycobacterium smegmatis)).